The following is a 510-amino-acid chain: 2,3-bisphosphoglycerate-independent phosphoglycerate mutase (510 aa).

Mn(2+) is bound by residues D12 and S62. The active-site Phosphoserine intermediate is the S62. Substrate contacts are provided by residues H121, 151–152, R183, R189, 258–261, and K331; these read RD and RPDR. Mn(2+)-binding residues include D398, H402, D439, H440, and H458.

Belongs to the BPG-independent phosphoglycerate mutase family. As to quaternary structure, monomer. Requires Mn(2+) as cofactor.

It carries out the reaction (2R)-2-phosphoglycerate = (2R)-3-phosphoglycerate. The protein operates within carbohydrate degradation; glycolysis; pyruvate from D-glyceraldehyde 3-phosphate: step 3/5. Its function is as follows. Catalyzes the interconversion of 2-phosphoglycerate and 3-phosphoglycerate. In Clostridioides difficile (strain 630) (Peptoclostridium difficile), this protein is 2,3-bisphosphoglycerate-independent phosphoglycerate mutase.